Consider the following 604-residue polypeptide: Glutamine--fructose-6-phosphate aminotransferase [isomerizing] (604 aa).

The Nucleophile; for GATase activity role is filled by Cys-2. The region spanning 2-218 (CGIVGVVGNR…DKELVILTKD (217 aa)) is the Glutamine amidotransferase type-2 domain. 2 consecutive SIS domains span residues 284–423 (IITS…ANGK) and 456–594 (VQAL…VDKP). Lys-599 functions as the For Fru-6P isomerization activity in the catalytic mechanism.

Homodimer.

It is found in the cytoplasm. The catalysed reaction is D-fructose 6-phosphate + L-glutamine = D-glucosamine 6-phosphate + L-glutamate. Functionally, catalyzes the first step in hexosamine metabolism, converting fructose-6P into glucosamine-6P using glutamine as a nitrogen source. The chain is Glutamine--fructose-6-phosphate aminotransferase [isomerizing] from Streptococcus pyogenes serotype M1.